The following is a 127-amino-acid chain: Protein FAM229A (127 aa).

The disordered stretch occupies residues 1–96; it reads MLPSSTPGPG…ATEHNPVRPL (96 aa). The segment covering 24–39 has biased composition (low complexity); sequence RSPAARAPAAASSLGP.

This sequence belongs to the FAM229 family.

This Homo sapiens (Human) protein is Protein FAM229A (FAM229A).